The sequence spans 95 residues: Large ribosomal subunit protein bL27 (95 aa).

Residues 1–25 are disordered; the sequence is MAHKKGTGSTRNGRDSNAQRLGVKR. A compositionally biased stretch (polar residues) spans 7–19; the sequence is TGSTRNGRDSNAQ.

This sequence belongs to the bacterial ribosomal protein bL27 family.

The sequence is that of Large ribosomal subunit protein bL27 from Gloeobacter violaceus (strain ATCC 29082 / PCC 7421).